Reading from the N-terminus, the 478-residue chain is Glutamate--tRNA ligase (478 aa).

The 'HIGH' region motif lies at 9 to 19 (PSPTGLLHIGT). The 'KMSKS' region signature appears at 248 to 252 (KLSKR). ATP is bound at residue lysine 251.

The protein belongs to the class-I aminoacyl-tRNA synthetase family. Glutamate--tRNA ligase type 1 subfamily. As to quaternary structure, monomer.

It localises to the cytoplasm. The catalysed reaction is tRNA(Glu) + L-glutamate + ATP = L-glutamyl-tRNA(Glu) + AMP + diphosphate. Its function is as follows. Catalyzes the attachment of glutamate to tRNA(Glu) in a two-step reaction: glutamate is first activated by ATP to form Glu-AMP and then transferred to the acceptor end of tRNA(Glu). The protein is Glutamate--tRNA ligase of Prochlorococcus marinus (strain MIT 9515).